Reading from the N-terminus, the 512-residue chain is Histidine ammonia-lyase (512 aa).

The 5-imidazolinone (Ala-Gly) cross-link spans 142 to 144 (ASG). Serine 143 bears the 2,3-didehydroalanine (Ser) mark.

Belongs to the PAL/histidase family. In terms of processing, contains an active site 4-methylidene-imidazol-5-one (MIO), which is formed autocatalytically by cyclization and dehydration of residues Ala-Ser-Gly.

The protein resides in the cytoplasm. It catalyses the reaction L-histidine = trans-urocanate + NH4(+). It functions in the pathway amino-acid degradation; L-histidine degradation into L-glutamate; N-formimidoyl-L-glutamate from L-histidine: step 1/3. This chain is Histidine ammonia-lyase, found in Bartonella tribocorum (strain CIP 105476 / IBS 506).